We begin with the raw amino-acid sequence, 483 residues long: Cobyric acid synthase (483 aa).

The region spanning 244-430 is the GATase cobBQ-type domain; sequence WLRVIAPVLP…LHGLFDHAEA (187 aa). Cys325 acts as the Nucleophile in catalysis. His422 is an active-site residue.

The protein belongs to the CobB/CobQ family. CobQ subfamily.

It participates in cofactor biosynthesis; adenosylcobalamin biosynthesis. In terms of biological role, catalyzes amidations at positions B, D, E, and G on adenosylcobyrinic A,C-diamide. NH(2) groups are provided by glutamine, and one molecule of ATP is hydrogenolyzed for each amidation. In Methylobacillus flagellatus (strain ATCC 51484 / DSM 6875 / VKM B-1610 / KT), this protein is Cobyric acid synthase.